Here is a 149-residue protein sequence, read N- to C-terminus: Nucleoside diphosphate kinase (149 aa).

Positions 9, 57, 85, 91, 102, and 112 each coordinate ATP. H115 functions as the Pros-phosphohistidine intermediate in the catalytic mechanism.

Belongs to the NDK family. Homotetramer. Requires Mg(2+) as cofactor.

The protein resides in the cytoplasm. The enzyme catalyses a 2'-deoxyribonucleoside 5'-diphosphate + ATP = a 2'-deoxyribonucleoside 5'-triphosphate + ADP. It carries out the reaction a ribonucleoside 5'-diphosphate + ATP = a ribonucleoside 5'-triphosphate + ADP. In terms of biological role, major role in the synthesis of nucleoside triphosphates other than ATP. The ATP gamma phosphate is transferred to the NDP beta phosphate via a ping-pong mechanism, using a phosphorylated active-site intermediate. The protein is Nucleoside diphosphate kinase of Roseiflexus sp. (strain RS-1).